Consider the following 509-residue polypeptide: uncharacterized protein (509 aa).

It belongs to the MG032/MG096/MG288 family.

This is an uncharacterized protein from Mycoplasma pneumoniae (strain ATCC 29342 / M129 / Subtype 1) (Mycoplasmoides pneumoniae).